Here is a 251-residue protein sequence, read N- to C-terminus: UPF0309 protein SGR_3073 (251 aa).

The SIS domain maps to 36–221 (VADTVASGGR…EQLVARGIEP (186 aa)).

The protein belongs to the UPF0309 family.

The chain is UPF0309 protein SGR_3073 from Streptomyces griseus subsp. griseus (strain JCM 4626 / CBS 651.72 / NBRC 13350 / KCC S-0626 / ISP 5235).